The following is a 352-amino-acid chain: S-adenosylmethionine:tRNA ribosyltransferase-isomerase (352 aa).

It belongs to the QueA family. Monomer.

The protein resides in the cytoplasm. It catalyses the reaction 7-aminomethyl-7-carbaguanosine(34) in tRNA + S-adenosyl-L-methionine = epoxyqueuosine(34) in tRNA + adenine + L-methionine + 2 H(+). The protein operates within tRNA modification; tRNA-queuosine biosynthesis. Its function is as follows. Transfers and isomerizes the ribose moiety from AdoMet to the 7-aminomethyl group of 7-deazaguanine (preQ1-tRNA) to give epoxyqueuosine (oQ-tRNA). This is S-adenosylmethionine:tRNA ribosyltransferase-isomerase from Dechloromonas aromatica (strain RCB).